A 205-amino-acid polypeptide reads, in one-letter code: LexA repressor (205 aa).

The segment at residues 28-48 (RAEIATRLGFKSANAAEEHLK) is a DNA-binding region (H-T-H motif). Residues S122 and K159 each act as for autocatalytic cleavage activity in the active site.

Belongs to the peptidase S24 family. In terms of assembly, homodimer.

The enzyme catalyses Hydrolysis of Ala-|-Gly bond in repressor LexA.. Functionally, represses a number of genes involved in the response to DNA damage (SOS response), including recA and lexA. In the presence of single-stranded DNA, RecA interacts with LexA causing an autocatalytic cleavage which disrupts the DNA-binding part of LexA, leading to derepression of the SOS regulon and eventually DNA repair. The chain is LexA repressor from Shewanella denitrificans (strain OS217 / ATCC BAA-1090 / DSM 15013).